We begin with the raw amino-acid sequence, 837 residues long: MMKRSNEGIGGENYASSPSDDGQQKRRKIQFEPVRMPAVSNVNDIRARAVVYQTSKLKQQLLYKNKRIAELEKENERSKRRQQTDESNFLKVYNMFSDIEKYICTQTKNEFGEYIGGDTAPTGIDVLGMTNETYNKFFDQAKQNLRNAFVSYAKARHDRAHESTIFIDKLKTLIDSPTFNPNGVHKELTAKAASLAIQNEKLQSEVTKVQSDCYNLERKKRILTDKLSVQENRVQELEHQLEDARFETDKHMRLANKFEYKLATLVSEGQSGGNGGATPSSSGTTNATEKKISAPDIPPSETAAKEIENLRLERDEQESIASRRLQDLEEMNKKVQTLTQENSKLRLETQTFFSVDSIVNSEEYKNLKKYYSLAIKEYERVSKDLEDITTERDAFRSAKEARAMLMSEEHQKTLKEIQCQSDIHNSFYKVSHDSEVLRCEFETVKEEYNKTVKQSEWDEMKATLNTLRSMNRSLKSEKIRLREKDKQSQKDINTLKSELTSLKEAQDKCLLVPLEDVSNAPPEDVNKIRQEYESLCKEVKRLGAMEKQEKQKQVENLQKEVNRQIADKLSELETLRKTNEMLTNDEECISDELEAIGTAVEEEQERNAQLYIEKREQEDRNLKMMNDRMIQNQTFNRLREKLSCLESKAQTDAQIAKMHEFEKKANEELVTKLSESVQFKSAELTRLTNLMEQHRKNIQEVGMSRDENQIKADRCEGQMKQIQELYAAKAREIEDFKFKRQRAEEELETLRIKYERVKRNESVPAQSGDQVLEEANRQMKETLTCPSCKTRPKDCIMLKCYHLFCETCIKTMYDTRQRKCPKCNSNFGANDFHRIFI.

The tract at residues 1 to 33 (MMKRSNEGIGGENYASSPSDDGQQKRRKIQFEP) is disordered. The interval 1–313 (MMKRSNEGIG…AKEIENLRLE (313 aa)) is interaction with ubc-1. Coiled-coil stretches lie at residues 54–89 (TSKLKQQLLYKNKRIAELEKENERSKRRQQTDESNF) and 185–253 (HKEL…KHMR). Positions 269–302 (GQSGGNGGATPSSSGTTNATEKKISAPDIPPSET) are disordered. Over residues 277–287 (ATPSSSGTTNA) the composition is skewed to polar residues. Coiled coils occupy residues 300-397 (SETA…AFRS), 458-651 (DEMK…KAQT), and 677-763 (VQFK…NESV). The RING-type zinc finger occupies 785 to 824 (CPSCKTRPKDCIMLKCYHLFCETCIKTMYDTRQRKCPKCN).

It belongs to the BRE1 family. Interacts with ubc-1. Interacts with mrg-1. In adult animals, expressed in oocytes, germ cells, pharyngeal and intestinal cells.

The protein localises to the nucleus. The enzyme catalyses S-ubiquitinyl-[E2 ubiquitin-conjugating enzyme]-L-cysteine + [acceptor protein]-L-lysine = [E2 ubiquitin-conjugating enzyme]-L-cysteine + N(6)-ubiquitinyl-[acceptor protein]-L-lysine.. Its pathway is protein modification; protein ubiquitination. E3 ubiquitin-protein ligase that mediates monoubiquitination of 'Lys-117' of histone H2B. H2B 'Lys-117' ubiquitination gives a specific tag for epigenetic transcriptional activation and is also prerequisite for histone H3 'Lys-4' and 'Lys-79' methylation. Involved in regulating stem cell proliferative fate. In Caenorhabditis elegans, this protein is E3 ubiquitin-protein ligase bre-1 (rfp-1).